The primary structure comprises 182 residues: Large ribosomal subunit protein uL5 (182 aa).

The protein belongs to the universal ribosomal protein uL5 family. Part of the 50S ribosomal subunit; part of the 5S rRNA/L5/L18/L25 subcomplex. Contacts the 5S rRNA and the P site tRNA. Forms a bridge to the 30S subunit in the 70S ribosome.

In terms of biological role, this is one of the proteins that bind and probably mediate the attachment of the 5S RNA into the large ribosomal subunit, where it forms part of the central protuberance. In the 70S ribosome it contacts protein S13 of the 30S subunit (bridge B1b), connecting the 2 subunits; this bridge is implicated in subunit movement. Contacts the P site tRNA; the 5S rRNA and some of its associated proteins might help stabilize positioning of ribosome-bound tRNAs. The chain is Large ribosomal subunit protein uL5 from Borreliella burgdorferi (strain ATCC 35210 / DSM 4680 / CIP 102532 / B31) (Borrelia burgdorferi).